The primary structure comprises 90 residues: Probable Fe(2+)-trafficking protein (90 aa).

This sequence belongs to the Fe(2+)-trafficking protein family.

In terms of biological role, could be a mediator in iron transactions between iron acquisition and iron-requiring processes, such as synthesis and/or repair of Fe-S clusters in biosynthetic enzymes. In Vibrio parahaemolyticus serotype O3:K6 (strain RIMD 2210633), this protein is Probable Fe(2+)-trafficking protein.